A 331-amino-acid chain; its full sequence is UPF0194 membrane protein YbhG (331 aa).

Residues 1–19 (MKKPVVIGLVIAAIVAVIA) form the signal peptide. The stretch at 140–209 (RTISANDLEN…DLQDTTLIAP (70 aa)) forms a coiled coil.

This sequence belongs to the UPF0194 family.

The protein localises to the periplasm. The sequence is that of UPF0194 membrane protein YbhG (ybhG) from Salmonella typhi.